The following is a 608-amino-acid chain: MKTLLIHAKHFEYEAREKALDAAESIDGNRSGSFENALVVFVTVEKGDGSSQDVVEEAAADVLDVFRRVGASRVVVYPYAHLSDDLADPEEAKRVLSQLAERISSAGVPVSRAPFGWYKRFSVECYGHPLSELSRTIKPGRRVRPGYADFAVMFPDGRIVGIEELRAEELPEDFVALLEAEVFKKKREGGEPKYLEYCRKFGFEWEPMSDLGHMRYGPEATIMLDAVAEYAWQCARSLGIPVYKVRGTNTFNLSFKPVAQHAQLFGDRLYQMEVDEKKLILRYAACHQQFAMVKDWEISYRDLPFGAFEVADSYRLEQPGELLLCFRLRKFYMPDLHVFCKDLAEAMEVSFRIHSKIYEEIRKLGRDYVSIYNLTRSFLEQHRDYLKRLVEMEGKPVLLHFVPEGKYYWVINVEYNIIDELGRPREIGTFQIDVGNAERFGITYVDENNTRRYPVIIHTAIIGSLERYVFAVLDTAAKKARAGEVPSLPLWLSPVQVRVIPHSSEYLKLADSIADKLEEQGIRVDVDDREESLAKRIRDAEVKWIPYVVVVGKREAESGKLTVRVRGQGQYEMSLEELVGRLVSELKGYPRVSAALPRYVSARPRYSP.

An editing domain region spans residues 1-145 (MKTLLIHAKH…TIKPGRRVRP (145 aa)). Catalytic regions lie at residues 192–489 (PKYL…PSLP) and 193–489 (KYLE…PSLP). The Zn(2+) site is built by cysteine 286, histidine 337, and histidine 458.

The protein belongs to the class-II aminoacyl-tRNA synthetase family. In terms of assembly, homodimer. Zn(2+) serves as cofactor.

Its subcellular location is the cytoplasm. The catalysed reaction is tRNA(Thr) + L-threonine + ATP = L-threonyl-tRNA(Thr) + AMP + diphosphate + H(+). Catalyzes the attachment of threonine to tRNA(Thr) in a two-step reaction: L-threonine is first activated by ATP to form Thr-AMP and then transferred to the acceptor end of tRNA(Thr). Also edits incorrectly charged L-seryl-tRNA(Thr). This is Threonine--tRNA ligase from Thermofilum pendens (strain DSM 2475 / Hrk 5).